A 408-amino-acid polypeptide reads, in one-letter code: G2/mitotic-specific cyclin-B (408 aa).

It belongs to the cyclin family. Cyclin AB subfamily. As to quaternary structure, interacts with the CDC2 protein kinase to form a serine/threonine kinase holoenzyme complex also known as maturation promoting factor (MPF). The cyclin subunit imparts substrate specificity to the complex.

Functionally, essential for the control of the cell cycle at the G2/M (mitosis) transition. This Patella vulgata (Common limpet) protein is G2/mitotic-specific cyclin-B.